The following is a 435-amino-acid chain: Cyclin-dependent kinase 14 (435 aa).

Residues 75–92 show a composition bias toward polar residues; that stretch reads RTQSSFDPFEKTSNQPTS. A disordered region spans residues 75-97; the sequence is RTQSSFDPFEKTSNQPTSPKFGK. The Protein kinase domain maps to 101 to 385; sequence YEKLEKLGEG…AQAALNHDYF (285 aa). Residues 107-115 and K130 contribute to the ATP site; that span reads LGEGSYATV. Catalysis depends on D222, which acts as the Proton acceptor.

Belongs to the protein kinase superfamily. CMGC Ser/Thr protein kinase family. CDC2/CDKX subfamily. Interacts with ccny; ccny mediates its recruitment to the plasma membrane and promotes phosphorylation of lrp6.

It localises to the cell membrane. The enzyme catalyses L-seryl-[protein] + ATP = O-phospho-L-seryl-[protein] + ADP + H(+). It catalyses the reaction L-threonyl-[protein] + ATP = O-phospho-L-threonyl-[protein] + ADP + H(+). Functionally, serine/threonine-protein kinase involved in the control of the eukaryotic cell cycle, whose activity is controlled by an associated cyclin. Acts as a cell-cycle regulator of Wnt signaling pathway during G2/M phase by mediating the phosphorylation of lrp6, leading to the activation of the Wnt signaling pathway. The sequence is that of Cyclin-dependent kinase 14 (cdk14) from Xenopus laevis (African clawed frog).